Reading from the N-terminus, the 281-residue chain is DegV domain-containing protein SCO2569 (281 aa).

One can recognise a DegV domain in the interval 5 to 280 (VAIVTDSTAY…PGLLGVVVSS (276 aa)). Hexadecanoate-binding residues include T62 and S95.

May bind long-chain fatty acids, such as palmitate, and may play a role in lipid transport or fatty acid metabolism. This is DegV domain-containing protein SCO2569 from Streptomyces coelicolor (strain ATCC BAA-471 / A3(2) / M145).